The following is a 214-amino-acid chain: Thiamine-phosphate synthase (214 aa).

4-amino-2-methyl-5-(diphosphooxymethyl)pyrimidine is bound by residues 40–44 and Asn-72; that span reads QLREK. Positions 73 and 92 each coordinate Mg(2+). Ser-110 lines the 4-amino-2-methyl-5-(diphosphooxymethyl)pyrimidine pocket. Position 137 to 139 (137 to 139) interacts with 2-[(2R,5Z)-2-carboxy-4-methylthiazol-5(2H)-ylidene]ethyl phosphate; it reads SPT. Lys-140 provides a ligand contact to 4-amino-2-methyl-5-(diphosphooxymethyl)pyrimidine. 2-[(2R,5Z)-2-carboxy-4-methylthiazol-5(2H)-ylidene]ethyl phosphate contacts are provided by residues Gly-167 and 185–186; that span reads IS.

It belongs to the thiamine-phosphate synthase family. The cofactor is Mg(2+).

It catalyses the reaction 2-[(2R,5Z)-2-carboxy-4-methylthiazol-5(2H)-ylidene]ethyl phosphate + 4-amino-2-methyl-5-(diphosphooxymethyl)pyrimidine + 2 H(+) = thiamine phosphate + CO2 + diphosphate. The enzyme catalyses 2-(2-carboxy-4-methylthiazol-5-yl)ethyl phosphate + 4-amino-2-methyl-5-(diphosphooxymethyl)pyrimidine + 2 H(+) = thiamine phosphate + CO2 + diphosphate. It carries out the reaction 4-methyl-5-(2-phosphooxyethyl)-thiazole + 4-amino-2-methyl-5-(diphosphooxymethyl)pyrimidine + H(+) = thiamine phosphate + diphosphate. Its pathway is cofactor biosynthesis; thiamine diphosphate biosynthesis; thiamine phosphate from 4-amino-2-methyl-5-diphosphomethylpyrimidine and 4-methyl-5-(2-phosphoethyl)-thiazole: step 1/1. In terms of biological role, condenses 4-methyl-5-(beta-hydroxyethyl)thiazole monophosphate (THZ-P) and 2-methyl-4-amino-5-hydroxymethyl pyrimidine pyrophosphate (HMP-PP) to form thiamine monophosphate (TMP). The polypeptide is Thiamine-phosphate synthase (Wolinella succinogenes (strain ATCC 29543 / DSM 1740 / CCUG 13145 / JCM 31913 / LMG 7466 / NCTC 11488 / FDC 602W) (Vibrio succinogenes)).